A 104-amino-acid polypeptide reads, in one-letter code: N(4)-acetylcytidine amidohydrolase (104 aa).

Residues 6-102 (TFYTRFQQDI…ELYVIAFKKV (97 aa)) enclose the ASCH domain. The active-site Proton acceptor is Lys-20. Catalysis depends on Thr-23, which acts as the Nucleophile. Glu-73 acts as the Proton donor in catalysis.

It belongs to the N(4)-acetylcytidine amidohydrolase family.

It carries out the reaction N(4)-acetylcytidine + H2O = cytidine + acetate + H(+). It catalyses the reaction N(4)-acetyl-2'-deoxycytidine + H2O = 2'-deoxycytidine + acetate + H(+). The enzyme catalyses N(4)-acetylcytosine + H2O = cytosine + acetate + H(+). Catalyzes the hydrolysis of N(4)-acetylcytidine (ac4C). In Cronobacter sakazakii (strain ATCC BAA-894) (Enterobacter sakazakii), this protein is N(4)-acetylcytidine amidohydrolase.